The following is a 552-amino-acid chain: Phosphoribosylaminoimidazole carboxylase (552 aa).

The ATP-grasp domain maps to 108–295 (KQHLQVFKIA…QFEAHLRAIC (188 aa)). Residue 134 to 189 (GQEFGYPFVLKSKTLAYDGRGNYVVHQPSEIPTAIKALGDRPLYVEKFVPFSMEIA) participates in ATP binding.

In the C-terminal section; belongs to the AIR carboxylase family. Class I subfamily.

The catalysed reaction is 5-amino-1-(5-phospho-D-ribosyl)imidazole-4-carboxylate + H(+) = 5-amino-1-(5-phospho-beta-D-ribosyl)imidazole + CO2. Its pathway is purine metabolism; IMP biosynthesis via de novo pathway; 5-amino-1-(5-phospho-D-ribosyl)imidazole-4-carboxylate from 5-amino-1-(5-phospho-D-ribosyl)imidazole (carboxylase route): step 1/1. The chain is Phosphoribosylaminoimidazole carboxylase (ade6) from Schizosaccharomyces pombe (strain 972 / ATCC 24843) (Fission yeast).